We begin with the raw amino-acid sequence, 86 residues long: CLAVATA3/ESR (CLE)-related protein 7 (86 aa).

Positions 1-22 (MASKALLLFVMLTFLLVIEMEG) are cleaved as a signal peptide. An N-linked (GlcNAc...) asparagine glycan is attached at asparagine 46. Positions 63–86 (VDRFSPGGPDPQHHSYPLSSKPRI) are disordered. A hydroxyproline mark is found at proline 68 and proline 71. Proline 71 is a glycosylation site (O-linked (Ara...) hydroxyproline).

It belongs to the CLV3/ESR signal peptide family. Post-translationally, the O-glycosylation (arabinosylation) of the hydroxyproline Pro-71 enhances binding affinity of the CLE7p peptide for its receptor. In terms of tissue distribution, expressed in roots and seedlings.

The protein localises to the secreted. It localises to the extracellular space. Functionally, extracellular signal peptide that regulates cell fate. The sequence is that of CLAVATA3/ESR (CLE)-related protein 7 from Arabidopsis thaliana (Mouse-ear cress).